A 379-amino-acid chain; its full sequence is Queuine tRNA-ribosyltransferase (379 aa).

Asp94 acts as the Proton acceptor in catalysis. Residues 94–98 (DSGGF), Asp148, Gln191, and Gly218 each bind substrate. Positions 249 to 255 (GVGSPDS) are RNA binding. The active-site Nucleophile is the Asp268. The RNA binding; important for wobble base 34 recognition stretch occupies residues 273 to 277 (TRIAR). Zn(2+) is bound by residues Cys306, Cys308, Cys311, and His337.

It belongs to the queuine tRNA-ribosyltransferase family. In terms of assembly, homodimer. Within each dimer, one monomer is responsible for RNA recognition and catalysis, while the other monomer binds to the replacement base PreQ1. The cofactor is Zn(2+).

The catalysed reaction is 7-aminomethyl-7-carbaguanine + guanosine(34) in tRNA = 7-aminomethyl-7-carbaguanosine(34) in tRNA + guanine. It functions in the pathway tRNA modification; tRNA-queuosine biosynthesis. Catalyzes the base-exchange of a guanine (G) residue with the queuine precursor 7-aminomethyl-7-deazaguanine (PreQ1) at position 34 (anticodon wobble position) in tRNAs with GU(N) anticodons (tRNA-Asp, -Asn, -His and -Tyr). Catalysis occurs through a double-displacement mechanism. The nucleophile active site attacks the C1' of nucleotide 34 to detach the guanine base from the RNA, forming a covalent enzyme-RNA intermediate. The proton acceptor active site deprotonates the incoming PreQ1, allowing a nucleophilic attack on the C1' of the ribose to form the product. After dissociation, two additional enzymatic reactions on the tRNA convert PreQ1 to queuine (Q), resulting in the hypermodified nucleoside queuosine (7-(((4,5-cis-dihydroxy-2-cyclopenten-1-yl)amino)methyl)-7-deazaguanosine). The protein is Queuine tRNA-ribosyltransferase of Bacillus mycoides (strain KBAB4) (Bacillus weihenstephanensis).